Consider the following 467-residue polypeptide: UDP-N-acetylmuramate--L-alanine ligase (467 aa).

123 to 129 (GTHGKST) lines the ATP pocket.

Belongs to the MurCDEF family.

It localises to the cytoplasm. It catalyses the reaction UDP-N-acetyl-alpha-D-muramate + L-alanine + ATP = UDP-N-acetyl-alpha-D-muramoyl-L-alanine + ADP + phosphate + H(+). The protein operates within cell wall biogenesis; peptidoglycan biosynthesis. In terms of biological role, cell wall formation. This is UDP-N-acetylmuramate--L-alanine ligase from Arthrobacter sp. (strain FB24).